Consider the following 503-residue polypeptide: ATP synthase subunit alpha (503 aa).

170–177 provides a ligand contact to ATP; it reads GDKQTGKT.

This sequence belongs to the ATPase alpha/beta chains family. F-type ATPases have 2 components, CF(1) - the catalytic core - and CF(0) - the membrane proton channel. CF(1) has five subunits: alpha(3), beta(3), gamma(1), delta(1), epsilon(1). CF(0) has three main subunits: a(1), b(2) and c(9-12). The alpha and beta chains form an alternating ring which encloses part of the gamma chain. CF(1) is attached to CF(0) by a central stalk formed by the gamma and epsilon chains, while a peripheral stalk is formed by the delta and b chains.

The protein localises to the cell inner membrane. The catalysed reaction is ATP + H2O + 4 H(+)(in) = ADP + phosphate + 5 H(+)(out). Its function is as follows. Produces ATP from ADP in the presence of a proton gradient across the membrane. The alpha chain is a regulatory subunit. The sequence is that of ATP synthase subunit alpha from Helicobacter acinonychis (strain Sheeba).